The following is a 308-amino-acid chain: Tetraspanin-12 (308 aa).

Residues 1-41 (MANRRQPVQHRAQQRVYRQSQIRYAPGAGGESEISCCVKYS) lie on the Cytoplasmic side of the membrane. A helical membrane pass occupies residues 42 to 62 (VFSFNVIFFLLGFGLLLFGVW). At 63-86 (AQIEKNTFVNMLSKASKLYLDPTW) the chain is on the extracellular side. A helical membrane pass occupies residues 87-107 (PLLIVGFLTFIIGFSGCVGSL). At 108 to 112 (RENTS) the chain is on the cytoplasmic side. Residues 113–133 (FLTFYSTLLGLLLIAEFSAGV) form a helical membrane-spanning segment. Topologically, residues 134–268 (FAYACRDQLD…PKLQLWLNNN (135 aa)) are extracellular. Residue Asn213 is glycosylated (N-linked (GlcNAc...) asparagine). Residues 269-289 (MLLVAVSMVIIAIIQVLGICF) form a helical membrane-spanning segment. Residues 290-308 (AQNLKSDILAQRAKWYYTH) lie on the Cytoplasmic side of the membrane.

It belongs to the tetraspanin (TM4SF) family. May interact with protease sup-17; the interaction promotes sup-17 cell membrane localization. As to expression, expressed in the germline.

It localises to the cell membrane. The protein localises to the cytoplasmic vesicle membrane. Its subcellular location is the endosome membrane. It is found in the early endosome membrane. The protein resides in the late endosome membrane. It localises to the recycling endosome membrane. The protein localises to the golgi apparatus. Its subcellular location is the trans-Golgi network membrane. Functions redundantly with tsp-14 isoform a to regulate body size, embryonic and vulva development. Functions redundantly with tsp-14 (isoforms a and b) to regulate cell fate specification in the postembryonic mesodermal M lineage and male development. May regulate BMP-like Sma/Mab signaling by mediating protease sup-17 trafficking to the cell surface. Together with tsp-14, functions redundantly to maintain cell surface levels of the BMP type II receptor daf-4 (but not BMP type I receptor sma-6), probably by regulating endosomal sorting of receptors and their targeting to degradative lysosomes. Together with tsp-14 involved in maintaining the structural and functional integrity of the endosomal network. Together with tsp-14, probably acts by modulating the activation of glp-1, a Notch-like receptor, to regulate germline maturation. Probably acts by modulating the activation of lin-12, a Notch-like receptor, to regulate cell fate specification such as the anchor cell/ventral uterine precursor cell decision. The chain is Tetraspanin-12 from Caenorhabditis elegans.